The sequence spans 102 residues: Small ribosomal subunit protein uS10 (102 aa).

The protein belongs to the universal ribosomal protein uS10 family. Part of the 30S ribosomal subunit.

Its function is as follows. Involved in the binding of tRNA to the ribosomes. The protein is Small ribosomal subunit protein uS10 of Cereibacter sphaeroides (strain ATCC 17029 / ATH 2.4.9) (Rhodobacter sphaeroides).